The sequence spans 438 residues: sn-glycerol-3-phosphate-binding periplasmic protein UgpB (438 aa).

Positions 1 to 23 are cleaved as a signal peptide; it reads MKPLHYTASALALGLALMGNAQA. Residues Y65, E89, S144, S270, G307, Y346, and R397 each contribute to the sn-glycerol 3-phosphate site.

This sequence belongs to the bacterial solute-binding protein 1 family. The complex is composed of two ATP-binding proteins (UgpC), two transmembrane proteins (UgpA and UgpE) and a solute-binding protein (UgpB).

It is found in the periplasm. Its function is as follows. Part of the ABC transporter complex UgpBAEC involved in sn-glycerol-3-phosphate (G3P) import. Binds G3P. This is sn-glycerol-3-phosphate-binding periplasmic protein UgpB (ugpB) from Shigella dysenteriae serotype 1 (strain Sd197).